A 93-amino-acid polypeptide reads, in one-letter code: Pyrimidine/purine nucleoside phosphorylase (93 aa).

This sequence belongs to the nucleoside phosphorylase PpnP family.

It carries out the reaction a purine D-ribonucleoside + phosphate = a purine nucleobase + alpha-D-ribose 1-phosphate. The catalysed reaction is adenosine + phosphate = alpha-D-ribose 1-phosphate + adenine. It catalyses the reaction cytidine + phosphate = cytosine + alpha-D-ribose 1-phosphate. The enzyme catalyses guanosine + phosphate = alpha-D-ribose 1-phosphate + guanine. It carries out the reaction inosine + phosphate = alpha-D-ribose 1-phosphate + hypoxanthine. The catalysed reaction is thymidine + phosphate = 2-deoxy-alpha-D-ribose 1-phosphate + thymine. It catalyses the reaction uridine + phosphate = alpha-D-ribose 1-phosphate + uracil. The enzyme catalyses xanthosine + phosphate = alpha-D-ribose 1-phosphate + xanthine. Functionally, catalyzes the phosphorolysis of diverse nucleosides, yielding D-ribose 1-phosphate and the respective free bases. Can use uridine, adenosine, guanosine, cytidine, thymidine, inosine and xanthosine as substrates. Also catalyzes the reverse reactions. The protein is Pyrimidine/purine nucleoside phosphorylase of Magnetococcus marinus (strain ATCC BAA-1437 / JCM 17883 / MC-1).